We begin with the raw amino-acid sequence, 682 residues long: L-type lectin-domain containing receptor kinase VI.2 (682 aa).

A signal peptide spans 1-26 (MGTQRSMFIVSFLFKLFLFLSVHVRA). Topologically, residues 27–310 (QRTTTNFAFR…AKKEGLNSQV (284 aa)) are extracellular. The segment at 29 to 277 (TTTNFAFRGF…AHYVMGWSFS (249 aa)) is legume-lectin like. A helical transmembrane segment spans residues 311–331 (IVMIVALSAVMLVMLVLLFFF). Topologically, residues 332–682 (VMYKKRLGQE…RVSSTSRISQ (351 aa)) are cytoplasmic. The 275-residue stretch at 367 to 641 (FKKTGIIGTG…LRYLNGEENV (275 aa)) folds into the Protein kinase domain. ATP-binding positions include 373 to 381 (IGTGGFGTV) and Lys395. Residue Asp494 is the Proton acceptor of the active site.

This sequence in the C-terminal section; belongs to the protein kinase superfamily. Ser/Thr protein kinase family. It in the N-terminal section; belongs to the leguminous lectin family. As to expression, strongly expressed in the vascular system and trichomes of the leaves. Also expressed in guard cells, anthers, stigmas and germinating seeds, but not found in petals or roots. Increased susceptibility to the bacteria Pseudomonas syringae, characterized by stronger necrotic symptoms and higher bacterial proliferation.

It localises to the cell membrane. The catalysed reaction is L-seryl-[protein] + ATP = O-phospho-L-seryl-[protein] + ADP + H(+). The enzyme catalyses L-threonyl-[protein] + ATP = O-phospho-L-threonyl-[protein] + ADP + H(+). Its function is as follows. Involved in negative regulation of abscisic acid response in seed germination. In terms of biological role, involved in resistance response to the pathogenic bacteria Pseudomonas syringae. In Arabidopsis thaliana (Mouse-ear cress), this protein is L-type lectin-domain containing receptor kinase VI.2.